Reading from the N-terminus, the 482-residue chain is Glutamate--tRNA ligase 2 (482 aa).

Positions 8 to 18 (PSPTGQLHIGG) match the 'HIGH' region motif. The 'KMSKS' region motif lies at 249-253 (KLSKR). Lys252 contacts ATP.

This sequence belongs to the class-I aminoacyl-tRNA synthetase family. Glutamate--tRNA ligase type 1 subfamily. Monomer.

The protein resides in the cytoplasm. The catalysed reaction is tRNA(Glu) + L-glutamate + ATP = L-glutamyl-tRNA(Glu) + AMP + diphosphate. Functionally, catalyzes the attachment of glutamate to tRNA(Glu) in a two-step reaction: glutamate is first activated by ATP to form Glu-AMP and then transferred to the acceptor end of tRNA(Glu). In Caldicellulosiruptor saccharolyticus (strain ATCC 43494 / DSM 8903 / Tp8T 6331), this protein is Glutamate--tRNA ligase 2.